A 792-amino-acid polypeptide reads, in one-letter code: Kinesin-associated protein 3 (792 aa).

A Phosphoserine modification is found at serine 60. Residues 103-119 (LSGKEKKEKSSKPKDPP) show a composition bias toward basic and acidic residues. Residues 103–124 (LSGKEKKEKSSKPKDPPPFEGM) are disordered. ARM repeat units lie at residues 333-373 (FMEN…NLSF), 374-412 (DTGLRNKMVQVGLLPKLTALLGNDNYKQIAMCVLYHISM), 494-533 (DGPTKNLFIDYVGDLAAQISNDEEEEFVIECLGTLANLTI), 578-620 (DDSC…QMVF), and 621-662 (HQAT…IIAE).

As to quaternary structure, heterotrimer of KIFAP3, KIF3A and KIF3B. Interacts with RAP1GDS1/SMG GDS. Interacts with SMC3 subunit of the cohesin complex. Post-translationally, phosphorylated on tyrosine residues by SRC in vitro; this reduces the binding affinity of the protein for RAP1GDS1.

Functionally, involved in tethering the chromosomes to the spindle pole and in chromosome movement. Binds to the tail domain of the KIF3A/KIF3B heterodimer to form a heterotrimeric KIF3 complex and may regulate the membrane binding of this complex. The sequence is that of Kinesin-associated protein 3 (KIFAP3) from Homo sapiens (Human).